Here is a 344-residue protein sequence, read N- to C-terminus: Protein-glutamate methylesterase/protein-glutamine glutaminase (344 aa).

Residues 7–124 (RVLVVDDSAF…SLTFRQVAPE (118 aa)) form the Response regulatory domain. A 4-aspartylphosphate modification is found at Asp-58. The CheB-type methylesterase domain maps to 154–344 (PAVSGKIVVI…KIPEKLIELV (191 aa)). Active-site residues include Ser-166, His-193, and Asp-289.

This sequence belongs to the CheB family. Phosphorylated by CheA. Phosphorylation of the N-terminal regulatory domain activates the methylesterase activity.

Its subcellular location is the cytoplasm. It carries out the reaction [protein]-L-glutamate 5-O-methyl ester + H2O = L-glutamyl-[protein] + methanol + H(+). The catalysed reaction is L-glutaminyl-[protein] + H2O = L-glutamyl-[protein] + NH4(+). In terms of biological role, involved in chemotaxis. Part of a chemotaxis signal transduction system that modulates chemotaxis in response to various stimuli. Catalyzes the demethylation of specific methylglutamate residues introduced into the chemoreceptors (methyl-accepting chemotaxis proteins or MCP) by CheR. Also mediates the irreversible deamidation of specific glutamine residues to glutamic acid. In Thermotoga maritima (strain ATCC 43589 / DSM 3109 / JCM 10099 / NBRC 100826 / MSB8), this protein is Protein-glutamate methylesterase/protein-glutamine glutaminase.